We begin with the raw amino-acid sequence, 237 residues long: MQKQAELYRGKAKTVYSTENPDLLVLEFRNDTSAGDGARIEQFDCKGMVNNKFNYFIMNKLAEAGIPTQMERLLSDTECLVKKLDMVPVECVVRNRAAGSLVKRLGIEEGIELNPPLFDLFLKNDAMHDPMVNESYCETFGWVSKENLARMKELTYKANDVLKKLFDDAGLILVDFKLEFGLYKGEVVLGDEFSPDGSRLWDKETLEKMDKDRFRQSLGGLIEAYEAVARRLGVQLD.

Belongs to the SAICAR synthetase family.

The catalysed reaction is 5-amino-1-(5-phospho-D-ribosyl)imidazole-4-carboxylate + L-aspartate + ATP = (2S)-2-[5-amino-1-(5-phospho-beta-D-ribosyl)imidazole-4-carboxamido]succinate + ADP + phosphate + 2 H(+). The protein operates within purine metabolism; IMP biosynthesis via de novo pathway; 5-amino-1-(5-phospho-D-ribosyl)imidazole-4-carboxamide from 5-amino-1-(5-phospho-D-ribosyl)imidazole-4-carboxylate: step 1/2. The polypeptide is Phosphoribosylaminoimidazole-succinocarboxamide synthase (Shigella dysenteriae serotype 1 (strain Sd197)).